We begin with the raw amino-acid sequence, 162 residues long: Endoribonuclease YbeY (162 aa).

The Zn(2+) site is built by H128, H132, and H138.

This sequence belongs to the endoribonuclease YbeY family. Zn(2+) is required as a cofactor.

The protein localises to the cytoplasm. Single strand-specific metallo-endoribonuclease involved in late-stage 70S ribosome quality control and in maturation of the 3' terminus of the 16S rRNA. The protein is Endoribonuclease YbeY of Lactococcus lactis subsp. lactis (strain IL1403) (Streptococcus lactis).